The primary structure comprises 257 residues: MAERRLTGLALKVGPLGEHDRLLSLLSNAEGVSRFAVPGARRPRSSLAAAAPLTLLELQVGGRSGLARVRQLRVLRSFSGLGQQLETLAAAQALCDLCIQLAAEDPVEGLLDTMQLHLERLEEHRADPELVLAGTVQACIHLLTLGGYGLPLQTCCITGDPLEPPLGQWDWRCSLLAQDGFAIDEQPGAAIQLNPSELALLQRLTRAELPRRRDGELMGPPAVWRRLLRVVEIWSRTHLNRPSKALAMLRETLLAGA.

It belongs to the RecO family.

In terms of biological role, involved in DNA repair and RecF pathway recombination. This Synechococcus sp. (strain CC9605) protein is DNA repair protein RecO.